A 480-amino-acid chain; its full sequence is UDP-glycosyltransferase 71C5 (480 aa).

Residues serine 290, 349-351 (APQ), 366-374 (HCGWNSVQE), and 388-391 (YAEQ) contribute to the UDP-alpha-D-glucose site.

It belongs to the UDP-glycosyltransferase family.

Possesses low quercetin 3-O-glucosyltransferase activity in vitro. This is UDP-glycosyltransferase 71C5 (UGT71C5) from Arabidopsis thaliana (Mouse-ear cress).